Reading from the N-terminus, the 2334-residue chain is Genome polyprotein (2334 aa).

The region spanning 487–647 (QKVVADIHTL…EGWQSTRHGS (161 aa)) is the SF3 helicase domain. Tyrosine 1007 bears the O-(5'-phospho-RNA)-tyrosine mark. In terms of domain architecture, Peptidase C24 spans 1102–1237 (GLPGYLRFNG…SKMCTLIDCT (136 aa)). Residues histidine 1128, aspartate 1145, and cysteine 1205 each act as for 3CLpro activity in the active site. One can recognise a RdRp catalytic domain in the interval 1488–1612 (GDFLCLDYSK…AMTPMMVSLL (125 aa)). Residues cysteine 1577 and cysteine 1584 are joined by a disulfide bond. The tract at residues 1760–1784 (EGKPRADAPGTATTASVPGTTTDGM) is disordered. The segment covering 1767 to 1781 (APGTATTASVPGTTT) has biased composition (low complexity).

Requires Mn(2+) as cofactor. Specific enzymatic cleavages by its own cysteine protease yield mature proteins. The protease cleaves itself from the nascent polyprotein autocatalytically. Precursor p41 can be cleaved by viral 3CLpro into protein p19 and VPg, or cleaved by host protease into protein p23/2 and protein p18. In terms of processing, VPg is uridylylated by the polymerase and is covalently attached to the 5'-end of the polyadenylated genomic and subgenomic RNAs. This uridylylated form acts as a nucleotide-peptide primer for the polymerase.

It localises to the virion. It is found in the host cytoplasm. It carries out the reaction a ribonucleoside 5'-triphosphate + H2O = a ribonucleoside 5'-diphosphate + phosphate + H(+). It catalyses the reaction Endopeptidase with a preference for cleavage when the P1 position is occupied by Glu-|-Xaa and the P1' position is occupied by Gly-|-Yaa.. The enzyme catalyses RNA(n) + a ribonucleoside 5'-triphosphate = RNA(n+1) + diphosphate. In terms of biological role, together with NTPase and NS4, initiates the formation of the replication complex. Induces the proliferation of the host smooth ER membranes forming long tubular structures. These remodeled membranes probably form the viral factories that contain the replication complex. Displays NTPase activity, but no helicase activity. Induces the formation of convoluted membranes derived from the host ER. These remodeled membranes probably form the viral factories that contain the replication complex. Together with NS2 and NS4, initiates the formation of the replication complex. Functionally, probable key protein responsible for the formation of membrane alterations by the virus. Induces the formation of convoluted membranes derived from the host ER. These remodeled membranes probably form the viral factories that contain the replication complex. Together with NS2 and NTPase, initiates the formation of the replication complex. Its function is as follows. Viral genome-linked protein is covalently linked to the 5'-end of the positive-strand, negative-strand genomic RNAs and subgenomic RNA. Acts as a genome-linked replication primer. May recruit ribosome to viral RNA thereby promoting viral proteins translation. Interacts with host translation initiation complex to allow the translation of viral proteins. In terms of biological role, processes the polyprotein. 3CLpro-RdRp is first released by autocleavage, then all other proteins are cleaved. May cleave polyadenylate-binding protein thereby inhibiting cellular translation. Replicates genomic and antigenomic RNA by recognizing replications specific signals. Also transcribes a subgenomic mRNA by initiating RNA synthesis internally on antigenomic RNA. This sgRNA codes for structural proteins. Catalyzes the covalent attachment VPg with viral RNAs. Functionally, capsid protein VP60 self assembles to form an icosahedral capsid with a T=3 symmetry, about 35 nm in diameter, and consisting of 180 capsid proteins. A smaller form of capsid with a diameter of 23 nm might be capsid proteins assembled as icosahedron with T=1 symmetry. The capsid encapsulate VP2 proteins and genomic or subgenomic RNA. Attaches virion to target cells by binding histo-blood group antigens, inducing endocytosis of the viral particle. Acidification of the endosome induces conformational change of capsid protein thereby injecting virus genomic RNA into host cytoplasm. The protein is Genome polyprotein of Lepus europaeus (European hare).